Reading from the N-terminus, the 138-residue chain is Envelope glycoprotein N (138 aa).

The signal sequence occupies residues 1–21 (MEWNTLVLGLLVLSVVAESSG). Topologically, residues 22–101 (NNSSTSTSAT…SHMYELSLSS (80 aa)) are virion surface. The helical transmembrane segment at 102-122 (FAAWWTMLNALILMGAFCIVL) threads the bilayer. The Intravirion portion of the chain corresponds to 123–138 (RHCCFQNFTATTTKGY).

This sequence belongs to the herpesviridae glycoprotein N family. In terms of assembly, interacts (via N-terminus) with gM (via N-terminus). The gM-gN heterodimer forms the gCII complex. Post-translationally, O-glycosylated.

The protein localises to the virion membrane. Its subcellular location is the host membrane. It localises to the host Golgi apparatus. It is found in the host trans-Golgi network. In terms of biological role, envelope glycoprotein necessary for proper maturation of gM and modulation of its membrane fusion activity. Also plays a critical role in virion morphogenesis. The sequence is that of Envelope glycoprotein N from Human cytomegalovirus (strain AD169) (HHV-5).